A 258-amino-acid chain; its full sequence is Regulatory protein RecX (258 aa).

This sequence belongs to the RecX family.

The protein localises to the cytoplasm. In terms of biological role, modulates RecA activity. In Streptococcus pneumoniae (strain 70585), this protein is Regulatory protein RecX.